Consider the following 97-residue polypeptide: Secreted RxLR effector protein BLR05 (97 aa).

The N-terminal stretch at 1 to 21 is a signal peptide; sequence MGPQHLLALVVVSILVAAGNA. The RxLR-dEER motif lies at 32–60; the sequence is RALRPSVIADQEHAVHAIPATNFISKDED. A helical transmembrane segment spans residues 69 to 89; it reads IEIIRIAIFSLLVVGVFAIMA.

The protein belongs to the RxLR effector family. Interacts with host transcription factor NAC069.

Its subcellular location is the secreted. It localises to the host endoplasmic reticulum membrane. Secreted effector that inhibits stress-induced relocalization of the transcription factor NAC069 to the nucleus, thus affecting its broad role in abiotic and biotic stress responses. This is Secreted RxLR effector protein BLR05 from Bremia lactucae (Lettuce downy mildew).